Reading from the N-terminus, the 1907-residue chain is Chromatin modification-related protein EAF1 B (1907 aa).

4 disordered regions span residues 108–208 (ASPH…TDLV), 261–287 (NRVS…GSKT), 323–373 (GGSP…SHAN), and 449–469 (NQSH…ETEK). The segment covering 140–151 (SENKSVEGERNL) has biased composition (basic and acidic residues). Polar residues-rich tracts occupy residues 261–270 (NRVSSNSLNT), 333–342 (GQKNSSTQLN), and 355–372 (TNRG…SSHA). One can recognise an HSA domain in the interval 563-641 (CGTAPVEVRE…LSYAILQFWS (79 aa)). 2 disordered regions span residues 836–909 (SSSL…AVQK) and 928–952 (AETS…TWHL). Residues 856-866 (RRVRTASRHRV) are compositionally biased toward basic residues. Polar residues-rich tracts occupy residues 884 to 898 (TDAS…QDEY) and 942 to 952 (QGSAYDQTWHL). Residues 1049 to 1105 (SGNPWSLFEDQALVVLVHDMGPNWELISDAMNSTLKIKYIYRNPTECKDRHKILMDK) form the SANT domain. 8 disordered regions span residues 1107-1131 (AGDG…PGIP), 1235-1266 (PVLP…GLQS), 1296-1319 (LSGR…DRGH), 1429-1465 (GHLS…QQEA), 1477-1594 (YLQQ…QQLN), 1638-1703 (VRPD…SPAT), 1767-1791 (VPQS…QASN), and 1824-1907 (VNNS…TKVE). Polar residues-rich tracts occupy residues 1116–1125 (DSGNSQSYPS), 1242–1266 (AHPS…GLQS), 1296–1310 (LSGR…STPA), 1431–1444 (LSQQ…SHVL), and 1453–1462 (QSPSQATGAQ). Positions 1493–1512 (PHVQQPQGSSVSSSSQNSPQ) are enriched in low complexity. Residues 1513–1529 (TQPPVSPQPLSMPPVSP) show a composition bias toward pro residues. 8 stretches are compositionally biased toward polar residues: residues 1532 to 1545 (NINA…QKSQ), 1554 to 1568 (SPQS…QAGK), 1585 to 1594 (RQPTQGQQLN), 1640 to 1655 (PDQQ…TDLQ), 1662 to 1672 (PLSSNHSQQLP), 1681 to 1703 (PSPQ…SPAT), 1769 to 1782 (QSVT…SMGT), and 1824 to 1844 (VNNS…NQGL). 2 stretches are compositionally biased toward basic and acidic residues: residues 1863 to 1872 (SEEKRPKLPE) and 1882 to 1892 (LASEEQPHLEE).

This sequence belongs to the EAF1 family. In terms of assembly, component of the NuA4 histone acetyltransferase complex. Interacts with ARP4 and SWC4, and (via HSA domain) with TAF14 and TAF14B. In terms of tissue distribution, expressed in leaves.

The protein resides in the nucleus. In terms of biological role, component of the NuA4 histone acetyltransferase complex which is involved in transcriptional activation of selected genes principally by acetylation of nucleosomal histone H4 and H2A. This is Chromatin modification-related protein EAF1 B (EAF1B) from Arabidopsis thaliana (Mouse-ear cress).